The primary structure comprises 375 residues: Neutral protease 2 homolog MGYG_00813 (375 aa).

Residues 1–19 form the signal peptide; sequence MQVIVALAALSSLAAPALG. A propeptide spanning residues 20–190 is cleaved from the precursor; sequence FSIPRGVPVS…SGPLTRIGKR (171 aa). 2 disulfide bridges follow: cysteine 198/cysteine 268 and cysteine 275/cysteine 293. Zn(2+) is bound at residue histidine 318. The active site involves glutamate 319. 2 residues coordinate Zn(2+): histidine 322 and aspartate 333.

The protein belongs to the peptidase M35 family. Zn(2+) serves as cofactor.

The protein resides in the secreted. It carries out the reaction Preferential cleavage of bonds with hydrophobic residues in P1'. Also 3-Asn-|-Gln-4 and 8-Gly-|-Ser-9 bonds in insulin B chain.. Its function is as follows. Secreted metalloproteinase that allows assimilation of proteinaceous substrates. Shows high activities on basic nuclear substrates such as histone and protamine. May be involved in virulence. The sequence is that of Neutral protease 2 homolog MGYG_00813 from Arthroderma gypseum (strain ATCC MYA-4604 / CBS 118893) (Microsporum gypseum).